A 341-amino-acid polypeptide reads, in one-letter code: Anthranilate phosphoribosyltransferase (341 aa).

Residues G84, 94–97, 112–120, and S124 each bind 5-phospho-alpha-D-ribose 1-diphosphate; these read NVST and KHGGRAASS. G84 serves as a coordination point for anthranilate. S96 serves as a coordination point for Mg(2+). An anthranilate-binding site is contributed by R170. Mg(2+)-binding residues include D229 and E230.

The protein belongs to the anthranilate phosphoribosyltransferase family. Homodimer. It depends on Mg(2+) as a cofactor.

The catalysed reaction is N-(5-phospho-beta-D-ribosyl)anthranilate + diphosphate = 5-phospho-alpha-D-ribose 1-diphosphate + anthranilate. Its pathway is amino-acid biosynthesis; L-tryptophan biosynthesis; L-tryptophan from chorismate: step 2/5. Its function is as follows. Catalyzes the transfer of the phosphoribosyl group of 5-phosphorylribose-1-pyrophosphate (PRPP) to anthranilate to yield N-(5'-phosphoribosyl)-anthranilate (PRA). The chain is Anthranilate phosphoribosyltransferase from Methylobacillus flagellatus (strain ATCC 51484 / DSM 6875 / VKM B-1610 / KT).